A 334-amino-acid polypeptide reads, in one-letter code: Beta-hexosaminidase (334 aa).

Substrate is bound by residues D60, R68, R133, and 163 to 164 (KH). The active-site Proton donor/acceptor is the H176. D247 acts as the Nucleophile in catalysis.

Belongs to the glycosyl hydrolase 3 family. NagZ subfamily.

It localises to the cytoplasm. It catalyses the reaction Hydrolysis of terminal non-reducing N-acetyl-D-hexosamine residues in N-acetyl-beta-D-hexosaminides.. It participates in cell wall biogenesis; peptidoglycan recycling. Plays a role in peptidoglycan recycling by cleaving the terminal beta-1,4-linked N-acetylglucosamine (GlcNAc) from peptide-linked peptidoglycan fragments, giving rise to free GlcNAc, anhydro-N-acetylmuramic acid and anhydro-N-acetylmuramic acid-linked peptides. This chain is Beta-hexosaminidase, found in Xanthomonas axonopodis pv. citri (strain 306).